The sequence spans 332 residues: Ketol-acid reductoisomerase (NADP(+)) (332 aa).

One can recognise a KARI N-terminal Rossmann domain in the interval 4–184 (ARMYYDEDAD…GGTRAGILET (181 aa)). Residues 27–30 (YGSQ), Ser-53, Ser-55, and 85–88 (DEVQ) each bind NADP(+). Residue His-110 is part of the active site. Position 136 (Gly-136) interacts with NADP(+). Residues 185–330 (TFREEAETDL…ADLRKMMSWL (146 aa)) form the KARI C-terminal knotted domain. Positions 193, 197, 229, and 233 each coordinate Mg(2+). Residue Ser-254 participates in substrate binding.

Belongs to the ketol-acid reductoisomerase family. Mg(2+) serves as cofactor.

The catalysed reaction is (2R)-2,3-dihydroxy-3-methylbutanoate + NADP(+) = (2S)-2-acetolactate + NADPH + H(+). It carries out the reaction (2R,3R)-2,3-dihydroxy-3-methylpentanoate + NADP(+) = (S)-2-ethyl-2-hydroxy-3-oxobutanoate + NADPH + H(+). It functions in the pathway amino-acid biosynthesis; L-isoleucine biosynthesis; L-isoleucine from 2-oxobutanoate: step 2/4. The protein operates within amino-acid biosynthesis; L-valine biosynthesis; L-valine from pyruvate: step 2/4. Functionally, involved in the biosynthesis of branched-chain amino acids (BCAA). Catalyzes an alkyl-migration followed by a ketol-acid reduction of (S)-2-acetolactate (S2AL) to yield (R)-2,3-dihydroxy-isovalerate. In the isomerase reaction, S2AL is rearranged via a Mg-dependent methyl migration to produce 3-hydroxy-3-methyl-2-ketobutyrate (HMKB). In the reductase reaction, this 2-ketoacid undergoes a metal-dependent reduction by NADPH to yield (R)-2,3-dihydroxy-isovalerate. This chain is Ketol-acid reductoisomerase (NADP(+)), found in Gloeobacter violaceus (strain ATCC 29082 / PCC 7421).